The following is a 361-amino-acid chain: Mitogen-activated protein kinase 14 (361 aa).

Positions 32 to 316 (YVPIKPIGRG…VSDALLHPYM (285 aa)) constitute a Protein kinase domain. Residues 38 to 46 (IGRGAYGVV) and K61 contribute to the ATP site. D158 serves as the catalytic Proton acceptor. Position 188 is a phosphothreonine (T188). The short motif at 188 to 190 (TEY) is the TXY element. Y190 is subject to Phosphotyrosine. Position 193 is a phosphothreonine (T193).

It belongs to the protein kinase superfamily. CMGC Ser/Thr protein kinase family. MAP kinase subfamily. Interacts with MKK3. Post-translationally, dually phosphorylated on Thr-188 and Tyr-190, which activates the enzyme.

It catalyses the reaction L-seryl-[protein] + ATP = O-phospho-L-seryl-[protein] + ADP + H(+). It carries out the reaction L-threonyl-[protein] + ATP = O-phospho-L-threonyl-[protein] + ADP + H(+). Its activity is regulated as follows. Activated by threonine and tyrosine phosphorylation. In Arabidopsis thaliana (Mouse-ear cress), this protein is Mitogen-activated protein kinase 14 (MPK14).